A 357-amino-acid chain; its full sequence is Probable GTP 3',8-cyclase (357 aa).

A Radical SAM core domain is found at 5–234 (DFGRDVSGVR…DRRRYWVSSR (230 aa)). Arg-14 is a GTP binding site. [4Fe-4S] cluster contacts are provided by Cys-21 and Cys-25. Position 27 (Tyr-27) interacts with S-adenosyl-L-methionine. Cys-28 is a binding site for [4Fe-4S] cluster. Lys-68 contacts GTP. Gly-72 lines the S-adenosyl-L-methionine pocket. GTP is bound at residue Thr-96. Ser-120 provides a ligand contact to S-adenosyl-L-methionine. Lys-157 provides a ligand contact to GTP. Residues 232–256 (SSRDAGSTADDAAQSVTPDGGAHPD) form a disordered region. The [4Fe-4S] cluster site is built by Cys-272 and Cys-275. Residue 277–279 (RVR) coordinates GTP. Residue Cys-289 coordinates [4Fe-4S] cluster.

This sequence belongs to the radical SAM superfamily. MoaA family. Requires [4Fe-4S] cluster as cofactor.

The enzyme catalyses GTP + AH2 + S-adenosyl-L-methionine = (8S)-3',8-cyclo-7,8-dihydroguanosine 5'-triphosphate + 5'-deoxyadenosine + L-methionine + A + H(+). The protein operates within cofactor biosynthesis; molybdopterin biosynthesis. Its function is as follows. Catalyzes the cyclization of GTP to (8S)-3',8-cyclo-7,8-dihydroguanosine 5'-triphosphate. This is Probable GTP 3',8-cyclase from Halobacterium salinarum (strain ATCC 29341 / DSM 671 / R1).